A 113-amino-acid chain; its full sequence is MNTLDFVDEKSLRSDVPDFRPGDTLNVHVKVIEGSKERIQVFKGVVIRRQGGGIRETFTVRKVSFGVGVERTFPVHSPNIDHIDVVTRGDVRRAKLYYLRDLRGKAAKIKEKR.

It belongs to the bacterial ribosomal protein bL19 family.

This protein is located at the 30S-50S ribosomal subunit interface and may play a role in the structure and function of the aminoacyl-tRNA binding site. The protein is Large ribosomal subunit protein bL19 of Nocardia farcinica (strain IFM 10152).